The following is a 376-amino-acid chain: UDP-N-acetylglucosamine--N-acetylmuramyl-(pentapeptide) pyrophosphoryl-undecaprenol N-acetylglucosamine transferase (376 aa).

UDP-N-acetyl-alpha-D-glucosamine is bound by residues 12–14 (TAG), N126, R163, S198, and Q296.

Belongs to the glycosyltransferase 28 family. MurG subfamily.

It localises to the cell membrane. The enzyme catalyses di-trans,octa-cis-undecaprenyl diphospho-N-acetyl-alpha-D-muramoyl-L-alanyl-D-glutamyl-meso-2,6-diaminopimeloyl-D-alanyl-D-alanine + UDP-N-acetyl-alpha-D-glucosamine = di-trans,octa-cis-undecaprenyl diphospho-[N-acetyl-alpha-D-glucosaminyl-(1-&gt;4)]-N-acetyl-alpha-D-muramoyl-L-alanyl-D-glutamyl-meso-2,6-diaminopimeloyl-D-alanyl-D-alanine + UDP + H(+). It functions in the pathway cell wall biogenesis; peptidoglycan biosynthesis. Functionally, cell wall formation. Catalyzes the transfer of a GlcNAc subunit on undecaprenyl-pyrophosphoryl-MurNAc-pentapeptide (lipid intermediate I) to form undecaprenyl-pyrophosphoryl-MurNAc-(pentapeptide)GlcNAc (lipid intermediate II). This Frankia casuarinae (strain DSM 45818 / CECT 9043 / HFP020203 / CcI3) protein is UDP-N-acetylglucosamine--N-acetylmuramyl-(pentapeptide) pyrophosphoryl-undecaprenol N-acetylglucosamine transferase.